A 511-amino-acid chain; its full sequence is MDIRPSEISKILKEQIKNFDQKAEVSEIGWVLSVGDGIARVYGLDNVQAGEMVAFPNGVRGMALNLEVDNVGVVIFGSDRDIREGDCVKRLGAIVDVPVGPALLGRVVDALGNPIDGKGPLKETERRRVDVKAPGIIPRQSVHEPMSTGLKAIDALIPIGRGQRELVIGDRQTGKTAILLDTFLNQKPFHEKGAGREQDKVYCIYVAIGQKRSTVAQFVKVLEERGALEYSIIVAATASDPAPLQFIAPLAGCAMGEYFRDNGQHALIGYDDLSKQAVAYRQMSLLLRRPPGREAYPGDVFYLHSRLLERAAKLNAENGSGSLTALPVIETQANDVSAYIPTNVISITDGQIFLETNLFYQGIRPAVNVGLSVSRVGSAAQIKAMKQVAGSIKGELAQYREMAAFAQFGSDLDASTQRLLNRGARLTELLKQPQFSPLKTEEQVVVIFAGVNGYLDSLAVSDVARFEQGLLVLLRSDYQDLLQAIAEQKQITDELKDKLITVLNTYAKNFS.

Residue 169 to 176 (GDRQTGKT) coordinates ATP.

The protein belongs to the ATPase alpha/beta chains family. F-type ATPases have 2 components, CF(1) - the catalytic core - and CF(0) - the membrane proton channel. CF(1) has five subunits: alpha(3), beta(3), gamma(1), delta(1), epsilon(1). CF(0) has three main subunits: a(1), b(2) and c(9-12). The alpha and beta chains form an alternating ring which encloses part of the gamma chain. CF(1) is attached to CF(0) by a central stalk formed by the gamma and epsilon chains, while a peripheral stalk is formed by the delta and b chains.

The protein localises to the cell inner membrane. The catalysed reaction is ATP + H2O + 4 H(+)(in) = ADP + phosphate + 5 H(+)(out). Produces ATP from ADP in the presence of a proton gradient across the membrane. The alpha chain is a regulatory subunit. In Bartonella tribocorum (strain CIP 105476 / IBS 506), this protein is ATP synthase subunit alpha.